The chain runs to 194 residues: Fatty acid metabolism regulator protein (194 aa).

The HTH tetR-type domain occupies 5 to 65 (RPKYMQIIDA…SLFKEKMGQF (61 aa)). Positions 28-47 (QVSKIAKQAGVADGTIYLYF) form a DNA-binding region, H-T-H motif.

In terms of assembly, homodimer. Binds to DNA.

The protein localises to the cytoplasm. In terms of biological role, transcriptional regulator in fatty acid degradation. Represses transcription of genes required for fatty acid transport and beta-oxidation, including acdA, fadA, fadB, fadE, fadF, fadG, fadH, fadM, fadN, lcfA and lcfB. Binding of FadR to DNA is specifically inhibited by long chain fatty acyl-CoA compounds of 14-20 carbon atoms in length. In Bacillus subtilis (strain 168), this protein is Fatty acid metabolism regulator protein (fadR).